Reading from the N-terminus, the 293-residue chain is MPEGKIIKALSGFYYVQHEEGITQCRGRGVFRKNKITPLVGDQVVFQAENQNEGYVLEVFERKNELVRPPIANVDQAILVFSAVEPDFNPGLLDRFLVLIEYHNIKPIICISKMDLVDEPMRKMVESYANDYREMGYAVLFTSVHAAESIEILKPFLEECVSVVAGQSGVGKSSMLNVLRPDLELKTNDISSHLGRGKHTTRHVELISIGSGLVADTPGFSSLDFIDIEVEDLTFCFPELKEESQYCKFRGCTHLSEPKCAVKAAVEEGRIADYRYEHYKQFVEEIRERKPRY.

Residues 63–223 enclose the CP-type G domain; sequence KNELVRPPIA…VADTPGFSSL (161 aa). GTP contacts are provided by residues 112–115 and 166–174; these read SKMD and GQSGVGKSS. Positions 247, 252, 254, and 260 each coordinate Zn(2+).

This sequence belongs to the TRAFAC class YlqF/YawG GTPase family. RsgA subfamily. In terms of assembly, monomer. Associates with 30S ribosomal subunit, binds 16S rRNA. Zn(2+) serves as cofactor.

The protein resides in the cytoplasm. In terms of biological role, one of several proteins that assist in the late maturation steps of the functional core of the 30S ribosomal subunit. Helps release RbfA from mature subunits. May play a role in the assembly of ribosomal proteins into the subunit. Circularly permuted GTPase that catalyzes slow GTP hydrolysis, GTPase activity is stimulated by the 30S ribosomal subunit. This is Small ribosomal subunit biogenesis GTPase RsgA from Bacillus cytotoxicus (strain DSM 22905 / CIP 110041 / 391-98 / NVH 391-98).